The sequence spans 684 residues: Methionine--tRNA ligase (684 aa).

A 'HIGH' region motif is present at residues 17–27 (PYANGKAHVGH). The Zn(2+) site is built by Cys-148, Cys-151, Cys-160, and Cys-164. A 'KMSKS' region motif is present at residues 330 to 334 (TFSKS). Lys-333 provides a ligand contact to ATP. Positions 582–684 (DFSKLDIRIG…KETNPGTCIH (103 aa)) constitute a tRNA-binding domain.

It belongs to the class-I aminoacyl-tRNA synthetase family. MetG type 1 subfamily. In terms of assembly, homodimer. Requires Zn(2+) as cofactor.

The protein localises to the cytoplasm. It catalyses the reaction tRNA(Met) + L-methionine + ATP = L-methionyl-tRNA(Met) + AMP + diphosphate. Is required not only for elongation of protein synthesis but also for the initiation of all mRNA translation through initiator tRNA(fMet) aminoacylation. This chain is Methionine--tRNA ligase, found in Methanococcoides burtonii (strain DSM 6242 / NBRC 107633 / OCM 468 / ACE-M).